We begin with the raw amino-acid sequence, 40 residues long: Acyl-CoA-binding protein 2 (40 aa).

A compositionally biased stretch (basic and acidic residues) spans 1 to 15 (ALKEEFEEHAEKAKT). The tract at residues 1–25 (ALKEEFEEHAEKAKTLPENTSSENK) is disordered. Residues 2-40 (LKEEFEEHAEKAKTLPENTSSENKLTLYGLYKQATVGNV) form the ACB domain.

This sequence belongs to the ACBP family.

The protein localises to the cytoplasm. Functionally, binds medium- and long-chain acyl-CoA esters with very high affinity and may function as an intracellular carrier of acyl-CoA esters. This is Acyl-CoA-binding protein 2 from Digitalis lanata (Grecian foxglove).